We begin with the raw amino-acid sequence, 509 residues long: Maturase K (509 aa).

It belongs to the intron maturase 2 family. MatK subfamily.

The protein resides in the plastid. The protein localises to the chloroplast. Its function is as follows. Usually encoded in the trnK tRNA gene intron. Probably assists in splicing its own and other chloroplast group II introns. The protein is Maturase K of Nicotiana alata (Winged tobacco).